A 166-amino-acid polypeptide reads, in one-letter code: Cofilin-1 (166 aa).

Residue A2 is modified to N-acetylalanine. Residues S3 and S8 each carry the phosphoserine modification. Residues 4-153 (GVAVSDGVIK…KDRCTLAEKL (150 aa)) enclose the ADF-H domain. K13 carries the N6-acetyllysine modification. Phosphothreonine is present on T25. A Nuclear localization signal motif is present at residues 30-34 (KKRKK). S41 is subject to Phosphoserine. A Phosphothreonine modification is found at T63. Residue Y68 is modified to Phosphotyrosine. K73 carries the post-translational modification N6-acetyllysine. Phosphotyrosine is present on Y82. K132 participates in a covalent cross-link: Glycyl lysine isopeptide (Lys-Gly) (interchain with G-Cter in SUMO2). Residue Y140 is modified to Phosphotyrosine. K144 bears the N6-acetyllysine mark. S156 is subject to Phosphoserine.

Belongs to the actin-binding proteins ADF family. Can bind G- and F-actin in a 1:1 ratio of cofilin to actin. It is a major component of intranuclear and cytoplasmic actin rods. Interacts with the subcortical maternal complex (SCMC) via interaction with TLE6 and NLRP5. Interacts with C9orf72. In terms of processing, inactivated by phosphorylation on Ser-3. Phosphorylated on Ser-3 in resting cells. Dephosphorylated by PDXP/chronophin; this restores its activity in promoting actin filament depolymerization. The phosphorylation of Ser-24 may prevent recognition of the nuclear localization signal. Phosphorylated via a ARRB1-RAC1-LIMK1-PAK1 cascade upon active ligand stimulation of atypical chemokine receptor ACKR2. In terms of tissue distribution, widely distributed in various tissues. Not found in skeletal muscle.

The protein resides in the nucleus matrix. It localises to the cytoplasm. The protein localises to the cytoskeleton. It is found in the cell projection. Its subcellular location is the ruffle membrane. The protein resides in the lamellipodium membrane. It localises to the lamellipodium. The protein localises to the growth cone. It is found in the axon. In terms of biological role, binds to F-actin and exhibits pH-sensitive F-actin depolymerizing activity. In conjunction with the subcortical maternal complex (SCMC), plays an essential role for zygotes to progress beyond the first embryonic cell divisions via regulation of actin dynamics. Required for the centralization of the mitotic spindle and symmetric division of zygotes. Plays a role in the regulation of cell morphology and cytoskeletal organization in epithelial cells. Required for the up-regulation of atypical chemokine receptor ACKR2 from endosomal compartment to cell membrane, increasing its efficiency in chemokine uptake and degradation. Required for neural tube morphogenesis and neural crest cell migration. The protein is Cofilin-1 (Cfl1) of Mus musculus (Mouse).